We begin with the raw amino-acid sequence, 705 residues long: Elongation factor G (705 aa).

In terms of domain architecture, tr-type G spans 8–294 (ELCRNFGIMA…SVIDYLPSPL (287 aa)). GTP contacts are provided by residues 17-24 (AHIDAGKT), 92-96 (DTPGH), and 146-149 (NKMD).

The protein belongs to the TRAFAC class translation factor GTPase superfamily. Classic translation factor GTPase family. EF-G/EF-2 subfamily.

The protein localises to the cytoplasm. In terms of biological role, catalyzes the GTP-dependent ribosomal translocation step during translation elongation. During this step, the ribosome changes from the pre-translocational (PRE) to the post-translocational (POST) state as the newly formed A-site-bound peptidyl-tRNA and P-site-bound deacylated tRNA move to the P and E sites, respectively. Catalyzes the coordinated movement of the two tRNA molecules, the mRNA and conformational changes in the ribosome. The chain is Elongation factor G from Cereibacter sphaeroides (strain ATCC 17023 / DSM 158 / JCM 6121 / CCUG 31486 / LMG 2827 / NBRC 12203 / NCIMB 8253 / ATH 2.4.1.) (Rhodobacter sphaeroides).